An 88-amino-acid chain; its full sequence is Large ribosomal subunit protein eL34 (88 aa).

The protein belongs to the eukaryotic ribosomal protein eL34 family.

This chain is Large ribosomal subunit protein eL34, found in Saccharolobus solfataricus (strain ATCC 35092 / DSM 1617 / JCM 11322 / P2) (Sulfolobus solfataricus).